The primary structure comprises 155 residues: Small ribosomal subunit protein uS9 (155 aa).

Belongs to the universal ribosomal protein uS9 family.

The protein is Small ribosomal subunit protein uS9 of Rhizobium etli (strain ATCC 51251 / DSM 11541 / JCM 21823 / NBRC 15573 / CFN 42).